The sequence spans 152 residues: Putative pre-16S rRNA nuclease (152 aa).

The protein belongs to the YqgF nuclease family.

The protein resides in the cytoplasm. Functionally, could be a nuclease involved in processing of the 5'-end of pre-16S rRNA. This chain is Putative pre-16S rRNA nuclease, found in Bifidobacterium longum (strain DJO10A).